The sequence spans 137 residues: Actin-depolymerizing factor 2 (137 aa).

In terms of domain architecture, ADF-H spans 5–137; it reads ASGMAVHDDC…GLDVFKSRTN (133 aa). Phosphoserine is present on S6.

Belongs to the actin-binding proteins ADF family. Interacts with AIP1-1.

The protein localises to the cytoplasm. It localises to the cytoskeleton. Functionally, actin-depolymerizing protein. Severs actin filaments (F-actin) and binds to actin monomers. Required for normal cell growth, plant development, cell organ expansion and flowering. Essential for root-knot nematode infection. The polypeptide is Actin-depolymerizing factor 2 (ADF2) (Arabidopsis thaliana (Mouse-ear cress)).